The primary structure comprises 99 residues: Protein Frey (99 aa).

The helical transmembrane segment at 10-29 threads the bilayer; it reads YPRAGLSLFLFYLILAGALL. The tract at residues 60-90 is disordered; that stretch reads DYGLRPKHPRPGGPRPLLSQAQQRKRDGPNM.

In terms of assembly, interacts with SPPL2C (via active sites); the interaction stabilizes FREY1 protein and inhibits SPPL2C proteolytic activity. Interacts with IZUMO1; the interaction retains IZUMO1 at the endoplasmic reticulum membrane and coordinates IZUMO1 complex assembly. As to expression, expressed in round spermatids (at protein level).

Its subcellular location is the endoplasmic reticulum membrane. Functionally, key regulator for male fertility expressed transiently in round spermatids where it recruits IZUMO1 at the endoplasmic reticulum (ER) membrane and coordinates the oolemmal binding multimeric complex (IZUMO1 complex) assembly. Upon complete assembly of the IZUMO1 complex, its ER retention is released, facilitating IZUMO1 complex export to the acrosome. Through the interaction with SPPL2C, inhibits its intramembrane protease activity directly accessing the catalytic center of an I-CLiP. This is Protein Frey from Mus musculus (Mouse).